Reading from the N-terminus, the 277-residue chain is 3-methyl-2-oxobutanoate hydroxymethyltransferase (277 aa).

The Mg(2+) site is built by Asp49 and Asp88. 3-methyl-2-oxobutanoate contacts are provided by residues 49 to 50, Asp88, and Lys118; that span reads DS. Glu120 contributes to the Mg(2+) binding site. The active-site Proton acceptor is Glu186.

The protein belongs to the PanB family. Homodecamer; pentamer of dimers. It depends on Mg(2+) as a cofactor.

It is found in the cytoplasm. It catalyses the reaction 3-methyl-2-oxobutanoate + (6R)-5,10-methylene-5,6,7,8-tetrahydrofolate + H2O = 2-dehydropantoate + (6S)-5,6,7,8-tetrahydrofolate. The protein operates within cofactor biosynthesis; (R)-pantothenate biosynthesis; (R)-pantoate from 3-methyl-2-oxobutanoate: step 1/2. In terms of biological role, catalyzes the reversible reaction in which hydroxymethyl group from 5,10-methylenetetrahydrofolate is transferred onto alpha-ketoisovalerate to form ketopantoate. The protein is 3-methyl-2-oxobutanoate hydroxymethyltransferase of Cereibacter sphaeroides (strain ATCC 17029 / ATH 2.4.9) (Rhodobacter sphaeroides).